The chain runs to 118 residues: MANPERIDVMVCLATVTPPKLVQVQVSATATVADAVRASGLLEEVGLSIDACRLGVYGKRKAPDALLHAHDRVEITGPLIADPKAARRRRVRRVRATGTREGLKWLRNEAPPEDDVAG.

This sequence belongs to the UPF0125 (RnfH) family.

This is UPF0125 protein RSc1426 from Ralstonia nicotianae (strain ATCC BAA-1114 / GMI1000) (Ralstonia solanacearum).